Consider the following 350-residue polypeptide: Glyceraldehyde-3-phosphate dehydrogenase (350 aa).

Residues 10-11, aspartate 36, arginine 82, and serine 125 contribute to the NAD(+) site; that span reads RI. Residues 161–163, threonine 193, 222–223, and arginine 245 each bind D-glyceraldehyde 3-phosphate; these read SCT and TG. Cysteine 162 acts as the Nucleophile in catalysis. An NAD(+)-binding site is contributed by asparagine 331.

It belongs to the glyceraldehyde-3-phosphate dehydrogenase family. Homotetramer.

It is found in the cytoplasm. It carries out the reaction D-glyceraldehyde 3-phosphate + phosphate + NAD(+) = (2R)-3-phospho-glyceroyl phosphate + NADH + H(+). It participates in carbohydrate degradation; glycolysis; pyruvate from D-glyceraldehyde 3-phosphate: step 1/5. Its function is as follows. Catalyzes the oxidative phosphorylation of glyceraldehyde 3-phosphate (G3P) to 1,3-bisphosphoglycerate (BPG) using the cofactor NAD. The first reaction step involves the formation of a hemiacetal intermediate between G3P and a cysteine residue, and this hemiacetal intermediate is then oxidized to a thioester, with concomitant reduction of NAD to NADH. The reduced NADH is then exchanged with the second NAD, and the thioester is attacked by a nucleophilic inorganic phosphate to produce BPG. This Treponema pallidum (strain Nichols) protein is Glyceraldehyde-3-phosphate dehydrogenase (gap).